A 120-amino-acid chain; its full sequence is NAD(P)H-quinone oxidoreductase subunit 3, chloroplastic (120 aa).

Helical transmembrane passes span Ile9–Gly29, Met64–Met84, and Val88–Leu108.

Belongs to the complex I subunit 3 family. In terms of assembly, NDH is composed of at least 16 different subunits, 5 of which are encoded in the nucleus.

It is found in the plastid. It localises to the chloroplast thylakoid membrane. The catalysed reaction is a plastoquinone + NADH + (n+1) H(+)(in) = a plastoquinol + NAD(+) + n H(+)(out). The enzyme catalyses a plastoquinone + NADPH + (n+1) H(+)(in) = a plastoquinol + NADP(+) + n H(+)(out). In terms of biological role, NDH shuttles electrons from NAD(P)H:plastoquinone, via FMN and iron-sulfur (Fe-S) centers, to quinones in the photosynthetic chain and possibly in a chloroplast respiratory chain. The immediate electron acceptor for the enzyme in this species is believed to be plastoquinone. Couples the redox reaction to proton translocation, and thus conserves the redox energy in a proton gradient. In Ceratophyllum demersum (Rigid hornwort), this protein is NAD(P)H-quinone oxidoreductase subunit 3, chloroplastic.